The primary structure comprises 311 residues: HPr kinase/phosphorylase (311 aa).

Catalysis depends on residues His-138 and Lys-159. Gly-153–Ser-160 is an ATP binding site. Ser-160 contacts Mg(2+). Asp-177 functions as the Proton acceptor; for phosphorylation activity. Proton donor; for dephosphorylation activity in the catalytic mechanism. The tract at residues Leu-201 to Asn-210 is important for the catalytic mechanism of both phosphorylation and dephosphorylation. Mg(2+) is bound at residue Glu-202. Residue Arg-243 is part of the active site. The important for the catalytic mechanism of dephosphorylation stretch occupies residues Pro-264–Arg-269.

The protein belongs to the HPrK/P family. In terms of assembly, homohexamer. Mg(2+) serves as cofactor.

The enzyme catalyses [HPr protein]-L-serine + ATP = [HPr protein]-O-phospho-L-serine + ADP + H(+). The catalysed reaction is [HPr protein]-O-phospho-L-serine + phosphate + H(+) = [HPr protein]-L-serine + diphosphate. Catalyzes the ATP- as well as the pyrophosphate-dependent phosphorylation of a specific serine residue in HPr, a phosphocarrier protein of the phosphoenolpyruvate-dependent sugar phosphotransferase system (PTS). HprK/P also catalyzes the pyrophosphate-producing, inorganic phosphate-dependent dephosphorylation (phosphorolysis) of seryl-phosphorylated HPr (P-Ser-HPr). The two antagonistic activities of HprK/P are regulated by several intracellular metabolites, which change their concentration in response to the absence or presence of rapidly metabolisable carbon sources (glucose, fructose, etc.) in the growth medium. Also phosphorylates/dephosphorylates the HPr-like catabolite repression protein crh on a specific serine residue. Therefore, by controlling the phosphorylation state of HPr and crh, HPrK/P is a sensor enzyme that plays a major role in the regulation of carbon metabolism and sugar transport: it mediates carbon catabolite repression (CCR), and regulates PTS-catalyzed carbohydrate uptake and inducer exclusion. The polypeptide is HPr kinase/phosphorylase (Geobacillus kaustophilus (strain HTA426)).